Consider the following 285-residue polypeptide: MKGGDNMNNVLMAFLLTLLAGLATGIGSCIAFFAKKTNKKFLCVSLGFSAGVMIYVSMIEMFQTAKESLVGVMGIKAGNWITVISFFAGIAIIALIDKFVPEEENPHEVRSVEEVENEIEEYKGENKEGKADIKDKTLMRTGIVTALAIAIHNFPEGLATFVSALEGASLAIPITIAIAIHNIPEGISVSVPIFYATGDKKKAFLYSFLSGMSEPIGAIIGYTLLRNIFNDITLGILLSAVAGIMVFISLDELLPTARKYGEHHLAIYGLIAGMVVMAVSLLLFI.

Helical transmembrane passes span 13 to 33 (AFLL…IAFF), 41 to 61 (FLCV…MIEM), and 80 to 100 (WITV…DKFV). Asn153 and Glu156 together coordinate Fe(2+). Residue Glu156 participates in Zn(2+) binding. Residues 160–180 (TFVSALEGASLAIPITIAIAI) traverse the membrane as a helical segment. Residue His181 coordinates Zn(2+). Fe(2+) is bound by residues Asn182, Glu185, and Glu214. A Zn(2+)-binding site is contributed by Glu185. 3 consecutive transmembrane segments (helical) span residues 204–224 (FLYS…GYTL), 228–248 (IFND…MVFI), and 265–285 (LAIY…LLFI).

This sequence belongs to the ZIP transporter (TC 2.A.5) family. ZupT subfamily.

It is found in the cell membrane. The enzyme catalyses Zn(2+)(in) = Zn(2+)(out). In terms of biological role, mediates zinc uptake. May also transport other divalent cations. In Clostridium perfringens (strain 13 / Type A), this protein is Zinc transporter ZupT.